The sequence spans 58 residues: Small ribosomal subunit protein eS27 (58 aa).

Residues C10, C13, C29, and C32 each coordinate Zn(2+). Residues C10–C32 form a C4-type zinc finger.

Belongs to the eukaryotic ribosomal protein eS27 family. As to quaternary structure, part of the 30S ribosomal subunit. Zn(2+) is required as a cofactor.

The sequence is that of Small ribosomal subunit protein eS27 from Archaeoglobus fulgidus (strain ATCC 49558 / DSM 4304 / JCM 9628 / NBRC 100126 / VC-16).